Reading from the N-terminus, the 399-residue chain is MSQKQPQSPNQTLISITNDTESSSSVVSNDTTNKGWTGDNSPGIEALCAIYITYAVIISVGILGNAILIKVFFKTKSMQTVPNIFITSLALGDLLLLLTCVPVDATHYLAEGWLFGRIGCKVLSFIRLTSVGVSVFTLTILSADRYKAVVKPLERQPSNAILKTCAKAGCIWIMSMIFALPEAIFSNVHTLRDPNKNMTSEWCAFYPVSEKLLQEIHALLSFLVFYIIPLSIISVYYSLIARTLYKSTLNIPTEEQSHARKQVESRKRIAKTVLVLVALFALCWLPNHLLNLYHSFTHKAYEDSSAIHFIVTIFSRVLAFSNSCVNPFALYWLSKTFQKQFKAQLFCCKGELPEPPLAATPLNSLAVMGRVSGTENTHISEIGVASFIGRPMKKEENRV.

At 1–41 (MSQKQPQSPNQTLISITNDTESSSSVVSNDTTNKGWTGDNS) the chain is on the extracellular side. N-linked (GlcNAc...) asparagine glycans are attached at residues Asn10 and Asn18. Residues 42-63 (PGIEALCAIYITYAVIISVGIL) form a helical membrane-spanning segment. The Cytoplasmic portion of the chain corresponds to 64–82 (GNAILIKVFFKTKSMQTVP). A helical transmembrane segment spans residues 83 to 103 (NIFITSLALGDLLLLLTCVPV). Over 104-121 (DATHYLAEGWLFGRIGCK) the chain is Extracellular. Cys120 and Cys203 are oxidised to a cystine. A helical transmembrane segment spans residues 122 to 143 (VLSFIRLTSVGVSVFTLTILSA). Topologically, residues 144-163 (DRYKAVVKPLERQPSNAILK) are cytoplasmic. A helical transmembrane segment spans residues 164-184 (TCAKAGCIWIMSMIFALPEAI). Residues 185-220 (FSNVHTLRDPNKNMTSEWCAFYPVSEKLLQEIHALL) lie on the Extracellular side of the membrane. A helical membrane pass occupies residues 221-241 (SFLVFYIIPLSIISVYYSLIA). Residues 242–272 (RTLYKSTLNIPTEEQSHARKQVESRKRIAKT) lie on the Cytoplasmic side of the membrane. Residues 273-293 (VLVLVALFALCWLPNHLLNLY) form a helical membrane-spanning segment. Topologically, residues 294–313 (HSFTHKAYEDSSAIHFIVTI) are extracellular. A helical transmembrane segment spans residues 314–333 (FSRVLAFSNSCVNPFALYWL). The Cytoplasmic segment spans residues 334-399 (SKTFQKQFKA…RPMKKEENRV (66 aa)). The S-palmitoyl cysteine moiety is linked to residue Cys347.

This sequence belongs to the G-protein coupled receptor 1 family. In terms of assembly, interacts with C6orf89. In terms of tissue distribution, mainly in uteri of pregnant animals.

It localises to the cell membrane. Its function is as follows. Role in sperm cell division, maturation, or function. The relative order of ligand affinity is GRP = neuromedin-C &gt;&gt; neuromedin-B. This receptor mediates its action by association with G proteins that activate a phosphatidylinositol-calcium second messenger system. In Cavia porcellus (Guinea pig), this protein is Bombesin receptor subtype-3 (BRS3).